The sequence spans 155 residues: uncharacterized protein (155 aa).

Residues 1–23 (MTILSLSRFMLAGVLLASFNASA) form the signal peptide.

This sequence to E.coli YfjT.

This is an uncharacterized protein from Escherichia coli (strain K12).